Here is a 360-residue protein sequence, read N- to C-terminus: D-alanine--D-alanine ligase (360 aa).

The ATP-grasp domain maps to 149 to 353 (KKLMAAEGLP…YEELLDVLVQ (205 aa)). 176–231 (KNLLGLPVFVKPARGGSSIGISRVTAWEDFNKAVGLARAHDEKVIVESEIVGSEVE) provides a ligand contact to ATP. 3 residues coordinate Mg(2+): D308, E320, and N322.

The protein belongs to the D-alanine--D-alanine ligase family. The cofactor is Mg(2+). Mn(2+) is required as a cofactor.

The protein resides in the cytoplasm. The enzyme catalyses 2 D-alanine + ATP = D-alanyl-D-alanine + ADP + phosphate + H(+). It functions in the pathway cell wall biogenesis; peptidoglycan biosynthesis. Functionally, cell wall formation. This is D-alanine--D-alanine ligase from Corynebacterium glutamicum (strain ATCC 13032 / DSM 20300 / JCM 1318 / BCRC 11384 / CCUG 27702 / LMG 3730 / NBRC 12168 / NCIMB 10025 / NRRL B-2784 / 534).